A 640-amino-acid polypeptide reads, in one-letter code: Rab proteins geranylgeranyltransferase component A (640 aa).

Disordered regions lie at residues 414-439 (DILG…NNNN) and 594-640 (HNEN…EMEL). Low complexity predominate over residues 419 to 439 (NNNNNNNNNNNNNNNNNNNNN). Residues 604 to 624 (IDSDEDEDEDINDMNDNEEED) show a composition bias toward acidic residues.

It belongs to the Rab GDI family.

Its function is as follows. Substrate-binding subunit (component A) of the Rab geranylgeranyltransferase (GGTase) complex. Binds unprenylated Rab proteins and presents the substrate peptide to the catalytic component B. The component A is thought to be regenerated by transferring its prenylated Rab back to the donor membrane. The polypeptide is Rab proteins geranylgeranyltransferase component A (MRS6) (Candida albicans (Yeast)).